The sequence spans 754 residues: MKNSIISYPRIGANRELKFAIEKYFKAQSSKEELLETAKNLRARHWKDIQNAGIDFIPSNDFSLYDNVLDTAVLFNIVHTKYKNLNLDALDEYFAQSRGYQGENGDVTALAMKKWFNTNYHYLVPECDDASIIALTGDKIFKEYLEAKELGIESKPVLIGIFTLFKLIAFKDKKTQKLAKEKLLNAYIELFDKLNELKVTWLELDEPYLVYDLSKEDIALFEEFYQELLNHKKDLKILLQSYFGDLRDIYPKLLESKFDALGLDFIEGKQSLALVQQYGFAKDKILFAGLINGKNIYANDYAKSLKLIKELQKYTQNIILNTSCSLLHVPYSTEFESKLDPSYLKLFAFAKEKLQELKDLKEILNSSEENPLFKANQELFKNIPERLDEKVKARLKALKKEDFTRTPSFKERALIQKEFLKLPLLPTTTIGSFPQSADVRSNRLAFKQKKISAQNYTEFNQQKIKECIQIQEEIGLDVLVHGEFERNDMVEYFGENLKGFLFTQNGWVQSYGTRCVKPPIIWGDVSRTKPITLACSKFAQSLSQKIVKGMLTGPVTILNWSFPREDISLKESTEQIALAIRDEVLDLENAGIKIIQIDEAALREKLPLRKSDWHSEYLDWAIPAFNLVHSGVKAKTQIHTHMCYSEFSDILKEIDAMDADVISFEASRSNLSLLDTLKAVHFKTEVGPGVYDIHSPRVPSVEELSLTIEKILNKLPKEQIWINPDCGLKTRAYEEVIASLKNLVTATQKIRKQL.

5-methyltetrahydropteroyltri-L-glutamate contacts are provided by residues 15–18 (RELK) and Lys114. Residues 430–432 (IGS) and Glu483 contribute to the L-homocysteine site. Residues 430–432 (IGS) and Glu483 each bind L-methionine. 5-methyltetrahydropteroyltri-L-glutamate-binding positions include 514 to 515 (RC) and Trp560. Asp598 lines the L-homocysteine pocket. Asp598 is a binding site for L-methionine. Glu604 contacts 5-methyltetrahydropteroyltri-L-glutamate. Residues His641, Cys643, and Glu665 each coordinate Zn(2+). His694 serves as the catalytic Proton donor. Cys726 provides a ligand contact to Zn(2+).

The protein belongs to the vitamin-B12 independent methionine synthase family. Zn(2+) serves as cofactor.

It catalyses the reaction 5-methyltetrahydropteroyltri-L-glutamate + L-homocysteine = tetrahydropteroyltri-L-glutamate + L-methionine. It participates in amino-acid biosynthesis; L-methionine biosynthesis via de novo pathway; L-methionine from L-homocysteine (MetE route): step 1/1. Functionally, catalyzes the transfer of a methyl group from 5-methyltetrahydrofolate to homocysteine resulting in methionine formation. The protein is 5-methyltetrahydropteroyltriglutamate--homocysteine methyltransferase of Campylobacter jejuni subsp. doylei (strain ATCC BAA-1458 / RM4099 / 269.97).